The following is a 560-amino-acid chain: Arginine--tRNA ligase (560 aa).

The 'HIGH' region signature appears at 135–145 (ANPTGLLHMGN).

Belongs to the class-I aminoacyl-tRNA synthetase family. In terms of assembly, monomer.

The protein localises to the cytoplasm. The enzyme catalyses tRNA(Arg) + L-arginine + ATP = L-arginyl-tRNA(Arg) + AMP + diphosphate. The chain is Arginine--tRNA ligase from Moorella thermoacetica (strain ATCC 39073 / JCM 9320).